We begin with the raw amino-acid sequence, 239 residues long: Prolyl hydroxylase EGLN3 (239 aa).

The segment at 62–73 is beta(2)beta(3) 'finger-like' loop; the sequence is AGPRAGVSKRHL. Residues 88-104 form a required for interaction with ADRB2 region; it reads CEAINFLLSLIDRLVLY. The Fe2OG dioxygenase domain occupies 116–214; sequence ERSKAMVACY…RYAMTVWYFD (99 aa). Fe cation-binding residues include His-135, Asp-137, and His-196. Position 205 (Arg-205) interacts with 2-oxoglutarate.

Interacts with ADRB2; the interaction hydroxylates ADRB2 facilitating its ubiquitination by the VHL-E3 ligase complex. Interacts with PKM; the interaction hydroxylates PKM in hypoxia. Interacts with WDR83; the interaction leads to almost complete elimination of HIF-mediated reporter activity. Interacts with BCL2 (via its BH4 domain); the interaction disrupts the BAX-BCL4 complex inhibiting the anti-apoptotic activity of BCL2. Interacts with LIMD1, WTIP and AJUBA. It depends on Fe(2+) as a cofactor. Requires L-ascorbate as cofactor. Post-translationally, ubiquitinated by SIAH1 and/or SIAH2 in response to the unfolded protein response (UPR), leading to its degradation. As to expression, highly expressed in cardiac and smooth muscle. Also high expression in brain, skeletal muscle and kidney. Low levels in lung.

The protein localises to the nucleus. The protein resides in the cytoplasm. It carries out the reaction L-prolyl-[protein] + 2-oxoglutarate + O2 = trans-4-hydroxy-L-prolyl-[protein] + succinate + CO2. It catalyses the reaction L-prolyl-[hypoxia-inducible factor alpha subunit] + 2-oxoglutarate + O2 = trans-4-hydroxy-L-prolyl-[hypoxia-inducible factor alpha subunit] + succinate + CO2. Its function is as follows. Prolyl hydroxylase that mediates hydroxylation of proline residues in target proteins, such as PKM, TELO2, ATF4 and HIF1A. Target proteins are preferentially recognized via a LXXLAP motif. Cellular oxygen sensor that catalyzes, under normoxic conditions, the post-translational formation of 4-hydroxyproline in hypoxia-inducible factor (HIF) alpha proteins. Hydroxylates a specific proline found in each of the oxygen-dependent degradation (ODD) domains (N-terminal, NODD, and C-terminal, CODD) of HIF1A. Also hydroxylates HIF2A. Has a preference for the CODD site for both HIF1A and HIF2A. Hydroxylation on the NODD site by EGLN3 appears to require prior hydroxylation on the CODD site. Hydroxylated HIFs are then targeted for proteasomal degradation via the von Hippel-Lindau ubiquitination complex. Under hypoxic conditions, the hydroxylation reaction is attenuated allowing HIFs to escape degradation resulting in their translocation to the nucleus, heterodimerization with HIF1B, and increased expression of hypoxy-inducible genes. ELGN3 is the most important isozyme in limiting physiological activation of HIFs (particularly HIF2A) in hypoxia. Also hydroxylates PKM in hypoxia, limiting glycolysis. Under normoxia, hydroxylates and regulates the stability of ADRB2. Regulator of cardiomyocyte and neuronal apoptosis. In cardiomyocytes, inhibits the anti-apoptotic effect of BCL2 by disrupting the BAX-BCL2 complex. In neurons, has a NGF-induced proapoptotic effect, probably through regulating CASP3 activity. Also essential for hypoxic regulation of neutrophilic inflammation. Plays a crucial role in DNA damage response (DDR) by hydroxylating TELO2, promoting its interaction with ATR which is required for activation of the ATR/CHK1/p53 pathway. Also mediates hydroxylation of ATF4, leading to decreased protein stability of ATF4. The protein is Prolyl hydroxylase EGLN3 of Mus musculus (Mouse).